A 461-amino-acid chain; its full sequence is Carbamoyl phosphate synthase arginine-specific small chain (461 aa).

One can recognise a Glutamine amidotransferase type-1 domain in the interval 240–427 (HVALIDCGVK…LENVQMYKDN (188 aa)). The active-site Nucleophile is the C316. Catalysis depends on residues H400 and E402.

This sequence belongs to the CarA family. In terms of assembly, heterodimer composed of 2 chains; the small (or glutamine) chain promotes the hydrolysis of glutamine to ammonia, which is used by the large (or ammonia) chain to synthesize carbamoyl phosphate.

The protein resides in the cytoplasm. It catalyses the reaction hydrogencarbonate + L-glutamine + 2 ATP + H2O = carbamoyl phosphate + L-glutamate + 2 ADP + phosphate + 2 H(+). The enzyme catalyses L-glutamine + H2O = L-glutamate + NH4(+). Its pathway is amino-acid biosynthesis; L-arginine biosynthesis; carbamoyl phosphate from bicarbonate: step 1/1. In terms of biological role, small subunit of the arginine-specific carbamoyl phosphate synthase (CPSase). CPSase catalyzes the formation of carbamoyl phosphate from the ammonia moiety of glutamine, carbonate, and phosphate donated by ATP, constituting the first step of 2 biosynthetic pathways, one leading to arginine and/or urea and the other to pyrimidine nucleotides. The small subunit (glutamine amidotransferase) binds and cleaves glutamine to supply the large subunit with the substrate ammonia. The protein is Carbamoyl phosphate synthase arginine-specific small chain (CPA1) of Chaetomium globosum (strain ATCC 6205 / CBS 148.51 / DSM 1962 / NBRC 6347 / NRRL 1970) (Soil fungus).